The following is a 121-amino-acid chain: MDFIKIVNEEFKSGKEHPKFNSGDTITVEYRIKEGNKERIQKYRGVVIRISGHGDKKRFTVRKISDGIGVERIFPIESPFIENITVEKYGKVRRAKLYYLRGLTGKKARIKERRVALSSKD.

This sequence belongs to the bacterial ribosomal protein bL19 family.

In terms of biological role, this protein is located at the 30S-50S ribosomal subunit interface and may play a role in the structure and function of the aminoacyl-tRNA binding site. This chain is Large ribosomal subunit protein bL19, found in Porphyromonas gingivalis (strain ATCC BAA-308 / W83).